The sequence spans 373 residues: Anhydro-N-acetylmuramic acid kinase (373 aa).

13–20 (GTSMDGID) is an ATP binding site.

Belongs to the anhydro-N-acetylmuramic acid kinase family.

The enzyme catalyses 1,6-anhydro-N-acetyl-beta-muramate + ATP + H2O = N-acetyl-D-muramate 6-phosphate + ADP + H(+). Its pathway is amino-sugar metabolism; 1,6-anhydro-N-acetylmuramate degradation. It participates in cell wall biogenesis; peptidoglycan recycling. In terms of biological role, catalyzes the specific phosphorylation of 1,6-anhydro-N-acetylmuramic acid (anhMurNAc) with the simultaneous cleavage of the 1,6-anhydro ring, generating MurNAc-6-P. Is required for the utilization of anhMurNAc either imported from the medium or derived from its own cell wall murein, and thus plays a role in cell wall recycling. The polypeptide is Anhydro-N-acetylmuramic acid kinase (Brucella abortus (strain 2308)).